Here is a 348-residue protein sequence, read N- to C-terminus: Elongation factor Ts (348 aa).

The tract at residues 82-85 is involved in Mg(2+) ion dislocation from EF-Tu; that stretch reads TDFV.

Belongs to the EF-Ts family.

Its subcellular location is the cytoplasm. Its function is as follows. Associates with the EF-Tu.GDP complex and induces the exchange of GDP to GTP. It remains bound to the aminoacyl-tRNA.EF-Tu.GTP complex up to the GTP hydrolysis stage on the ribosome. The chain is Elongation factor Ts from Aliarcobacter butzleri (strain RM4018) (Arcobacter butzleri).